The chain runs to 111 residues: Nucleoid-associated protein Ppha_1174 (111 aa).

The protein belongs to the YbaB/EbfC family. In terms of assembly, homodimer.

The protein resides in the cytoplasm. Its subcellular location is the nucleoid. Its function is as follows. Binds to DNA and alters its conformation. May be involved in regulation of gene expression, nucleoid organization and DNA protection. This chain is Nucleoid-associated protein Ppha_1174, found in Pelodictyon phaeoclathratiforme (strain DSM 5477 / BU-1).